Consider the following 510-residue polypeptide: Mitogen-activated protein kinase 9 (510 aa).

A Protein kinase domain is found at 23–314; the sequence is YQIQEVIGKG…AEEALADPYF (292 aa). Residues 29-37 and K52 contribute to the ATP site; that span reads IGKGSYGVV. D149 serves as the catalytic Proton acceptor. T185 bears the Phosphothreonine mark. A TXY motif is present at residues 185-187; that stretch reads TDY. A Phosphotyrosine modification is found at Y187. A Phosphothreonine modification is found at T190. Residues 393-461 form a disordered region; that stretch reads NYGKGEKGSP…SDYRNGTSQT (69 aa). Basic and acidic residues predominate over residues 410 to 431; sequence LPRERVPAPKKENGSHNHDIEN. Over residues 433 to 461 the composition is skewed to polar residues; it reads SIASLVTTLESPPTSQHEGSDYRNGTSQT.

The protein belongs to the protein kinase superfamily. CMGC Ser/Thr protein kinase family. MAP kinase subfamily. Dually phosphorylated on Thr-185 and Tyr-187, which activates the enzyme.

The catalysed reaction is L-seryl-[protein] + ATP = O-phospho-L-seryl-[protein] + ADP + H(+). It carries out the reaction L-threonyl-[protein] + ATP = O-phospho-L-threonyl-[protein] + ADP + H(+). With respect to regulation, activated by threonine and tyrosine phosphorylation. The protein is Mitogen-activated protein kinase 9 (MPK9) of Arabidopsis thaliana (Mouse-ear cress).